Reading from the N-terminus, the 336-residue chain is Eukaryotic translation initiation factor 3 subunit I (336 aa).

6 WD repeats span residues 8-49, 50-91, 93-135, 144-183, 187-226, and 285-324; these read GHER…GTYN, GHNG…KAWE, PTAI…GPQP, PIGSKAQVVAFSSLDKHLITGHENGKVALWDVNTGEEVAS, NHIGLITDLQMSADRTYFVTSSKDKSARLYDSRTLEVIKS, and GGFGPCNSIAVHPEGKGYAIGGEDGYVRLHHFDENTFRAK.

It belongs to the eIF-3 subunit I family. Component of the eukaryotic translation initiation factor 3 (eIF-3) complex.

It localises to the cytoplasm. Functionally, component of the eukaryotic translation initiation factor 3 (eIF-3) complex, which is involved in protein synthesis of a specialized repertoire of mRNAs and, together with other initiation factors, stimulates binding of mRNA and methionyl-tRNAi to the 40S ribosome. The eIF-3 complex specifically targets and initiates translation of a subset of mRNAs involved in cell proliferation. The polypeptide is Eukaryotic translation initiation factor 3 subunit I (Puccinia graminis f. sp. tritici (strain CRL 75-36-700-3 / race SCCL) (Black stem rust fungus)).